Reading from the N-terminus, the 54-residue chain is UPF0181 protein PM0480 (54 aa).

The protein belongs to the UPF0181 family.

The protein is UPF0181 protein PM0480 of Pasteurella multocida (strain Pm70).